We begin with the raw amino-acid sequence, 387 residues long: Cytochrome b (387 aa).

The helical transmembrane segment at 32-52 threads the bilayer; it reads LGSLLGLCLVIQIASGVFLAM. Heme b is bound by residues histidine 82 and histidine 96. The next 8 helical transmembrane spans lie at 85–105, 116–136, 151–171, 179–199, 225–245, 289–309, 324–344, and 350–370; these read GASFFFICMYLHIGKALYYGS, IGVVIFILTMAIAFMGYCLVY, LSAIPFIGNDIVPFIWGGFSV, FFALHFLLPFILAALVCMHLM, FIFKDLITVFVFLLIFSLFVF, LGGVIAMFGAILILLSLPYTD, LAFYLFVFNFILLGNLGQLHV, and QLGQFATAYYFAHYIIVVPVI. Heme b contacts are provided by histidine 183 and histidine 197.

The protein belongs to the cytochrome b family. Component of the ubiquinol-cytochrome c oxidoreductase (cytochrome b-c1 complex, complex III, CIII), a multisubunit enzyme composed of 10 subunits. The complex is composed of 3 respiratory subunits cytochrome b (COB), cytochrome c1 (CYT1) and Rieske protein (RIP1), 2 core protein subunits COR1 and QCR2, and 5 low-molecular weight protein subunits QCR6, QCR7, QCR8, QCR9 and QCR10. The complex exists as an obligatory dimer and forms supercomplexes (SCs) in the inner mitochondrial membrane with a monomer or a dimer of cytochrome c oxidase (complex IV, CIV), resulting in 2 different assemblies (supercomplexes III(2)IV and III(2)IV(2)). The cofactor is heme b.

It is found in the mitochondrion inner membrane. Its function is as follows. Component of the ubiquinol-cytochrome c oxidoreductase, a multisubunit transmembrane complex that is part of the mitochondrial electron transport chain which drives oxidative phosphorylation. The complex plays an important role in the uptake of multiple carbon sources present in different host niches. The chain is Cytochrome b from Candida albicans (strain SC5314 / ATCC MYA-2876) (Yeast).